Consider the following 277-residue polypeptide: Cell wall protein PGA30 (277 aa).

Residues 1–18 (MKYFTIATVLTLASSALA) form the signal peptide. Asparagine 129 and asparagine 178 each carry an N-linked (GlcNAc...) asparagine glycan. A disordered region spans residues 219 to 246 (VLPSSSTEAPPKTSVAAPSTTAEAQTTA). Over residues 234 to 246 (AAPSTTAEAQTTA) the composition is skewed to polar residues. Glycine 253 carries GPI-anchor amidated glycine lipidation. Residues 254 to 277 (GANEIVGGGSMAIALAAAAIGLVI) constitute a propeptide, removed in mature form.

This sequence belongs to the SRP1/TIP1 family. In terms of processing, the GPI-anchor is attached to the protein in the endoplasmic reticulum and serves to target the protein to the cell surface. There, the glucosamine-inositol phospholipid moiety is cleaved off and the GPI-modified mannoprotein is covalently attached via its lipidless GPI glycan remnant to the 1,6-beta-glucan of the outer cell wall layer.

It is found in the secreted. The protein resides in the cell wall. Its subcellular location is the membrane. Component of the cell wall involved in virulence which plays a role in the relationship between C.albicans and the host. The chain is Cell wall protein PGA30 (PGA30) from Candida albicans (strain SC5314 / ATCC MYA-2876) (Yeast).